The sequence spans 256 residues: Hydroxyethylthiazole kinase (256 aa).

M38 contacts substrate. The ATP site is built by R114 and T159. G186 is a binding site for substrate.

It belongs to the Thz kinase family. It depends on Mg(2+) as a cofactor.

It carries out the reaction 5-(2-hydroxyethyl)-4-methylthiazole + ATP = 4-methyl-5-(2-phosphooxyethyl)-thiazole + ADP + H(+). Its pathway is cofactor biosynthesis; thiamine diphosphate biosynthesis; 4-methyl-5-(2-phosphoethyl)-thiazole from 5-(2-hydroxyethyl)-4-methylthiazole: step 1/1. In terms of biological role, catalyzes the phosphorylation of the hydroxyl group of 4-methyl-5-beta-hydroxyethylthiazole (THZ). This chain is Hydroxyethylthiazole kinase, found in Streptococcus agalactiae serotype Ia (strain ATCC 27591 / A909 / CDC SS700).